Reading from the N-terminus, the 471-residue chain is BRISC complex subunit FAM175B (471 aa).

An MPN domain is found at 7-161 (LVTISGAALS…THKFRHVFLR (155 aa)). Positions 245 to 272 (ESDLEVAELEKQVHELKIKIATQQLAKR) form a coiled coil. The segment at 343 to 445 (AEKSRRAGRS…FSDAECPISS (103 aa)) is disordered. Low complexity predominate over residues 359 to 370 (NQQQETQNFFTN).

The protein belongs to the FAM175 family. Abro1 subfamily. Component of the BRISC complex, at least composed of FAM175B/ABRO1, BRCC3/BRCC36, BABAM2 and BABAM1/NBA1. Within the complex, interacts directly with BRCC3/BRCC36. The heterodimer with BRCC3/BRCC36 assembles into a heterotetramer. The BRISC complex binds polyubiquitin.

It localises to the cytoplasm. The protein localises to the nucleus. Its subcellular location is the cytoskeleton. It is found in the spindle pole. Component of the BRISC complex that specifically cleaves 'Lys-63'-linked polyubiquitin, leaving the last ubiquitin chain attached to its substrates. Does not have activity by itself, but the catalytic subunit BRCC3/BRCC36 needs to be associated into a heterotetramer with FAM175B for minimal in vitro activity. May act as a central scaffold protein that assembles the various components of the BRISC complex and retains them in the cytoplasm. Plays a role in regulating the onset of apoptosis via its role in modulating 'Lys-63'-linked ubiquitination of target proteins. Required for normal mitotic spindle assembly and microtubule attachment to kinetochores via its role in deubiquitinating numa1. In Camponotus floridanus (Florida carpenter ant), this protein is BRISC complex subunit FAM175B.